A 72-amino-acid polypeptide reads, in one-letter code: Inner membrane protein YmgF (72 aa).

At M1–Y9 the chain is on the cytoplasmic side. The chain crosses the membrane as a helical span at residues F10–I30. Over A31–S34 the chain is Periplasmic. A helical transmembrane segment spans residues T35 to I55. Over N56 to Q72 the chain is Cytoplasmic.

Interacts with FtsL, FtsQ, FtsI, FtsN, and probably many other cell division proteins.

It is found in the cell inner membrane. Its function is as follows. Could be involved in cell division. May participate in the stabilization of the cell divisome under specific conditions. The polypeptide is Inner membrane protein YmgF (ymgF) (Escherichia coli (strain K12)).